A 301-amino-acid polypeptide reads, in one-letter code: Oxygen-dependent coproporphyrinogen-III oxidase (301 aa).

S92 serves as a coordination point for substrate. The a divalent metal cation site is built by H96 and H106. The active-site Proton donor is the H106. Residue 108–110 (NVR) coordinates substrate. A divalent metal cation-binding residues include H145 and H175. Positions 240–275 (YVEFNLVWDRGTLFGLQTGGRTESILMSMPPLVRWE) are important for dimerization. 258–260 (GGR) is a binding site for substrate.

The protein belongs to the aerobic coproporphyrinogen-III oxidase family. As to quaternary structure, homodimer. A divalent metal cation is required as a cofactor.

It is found in the cytoplasm. The catalysed reaction is coproporphyrinogen III + O2 + 2 H(+) = protoporphyrinogen IX + 2 CO2 + 2 H2O. It functions in the pathway porphyrin-containing compound metabolism; protoporphyrin-IX biosynthesis; protoporphyrinogen-IX from coproporphyrinogen-III (O2 route): step 1/1. Its function is as follows. Involved in the heme biosynthesis. Catalyzes the aerobic oxidative decarboxylation of propionate groups of rings A and B of coproporphyrinogen-III to yield the vinyl groups in protoporphyrinogen-IX. The chain is Oxygen-dependent coproporphyrinogen-III oxidase from Cronobacter sakazakii (strain ATCC BAA-894) (Enterobacter sakazakii).